The sequence spans 241 residues: 1-(5-phosphoribosyl)-5-[(5-phosphoribosylamino)methylideneamino] imidazole-4-carboxamide isomerase (241 aa).

The active-site Proton acceptor is Asp-12. Catalysis depends on Asp-133, which acts as the Proton donor.

The protein belongs to the HisA/HisF family.

Its subcellular location is the cytoplasm. The catalysed reaction is 1-(5-phospho-beta-D-ribosyl)-5-[(5-phospho-beta-D-ribosylamino)methylideneamino]imidazole-4-carboxamide = 5-[(5-phospho-1-deoxy-D-ribulos-1-ylimino)methylamino]-1-(5-phospho-beta-D-ribosyl)imidazole-4-carboxamide. It participates in amino-acid biosynthesis; L-histidine biosynthesis; L-histidine from 5-phospho-alpha-D-ribose 1-diphosphate: step 4/9. This Persephonella marina (strain DSM 14350 / EX-H1) protein is 1-(5-phosphoribosyl)-5-[(5-phosphoribosylamino)methylideneamino] imidazole-4-carboxamide isomerase.